The chain runs to 143 residues: Sirohydrochlorin cobaltochelatase (143 aa).

Histidine 9 serves as the catalytic Proton acceptor. Position 9 (histidine 9) interacts with Co(2+). Ni(2+) is bound at residue histidine 9. Substrate-binding positions include glutamate 45 and 70–75; that span reads LAHGNH. Histidine 75 is a Co(2+) binding site. Histidine 75 serves as a coordination point for Ni(2+).

The protein belongs to the CbiX family. CbiXS subfamily. In terms of assembly, homotetramer; dimer of dimers.

It catalyses the reaction Co-sirohydrochlorin + 2 H(+) = sirohydrochlorin + Co(2+). The catalysed reaction is Ni-sirohydrochlorin + 2 H(+) = sirohydrochlorin + Ni(2+). It functions in the pathway cofactor biosynthesis; adenosylcobalamin biosynthesis; cob(II)yrinate a,c-diamide from sirohydrochlorin (anaerobic route): step 1/10. In terms of biological role, catalyzes the insertion of Co(2+) into sirohydrochlorin as part of the anaerobic pathway to cobalamin biosynthesis. Involved in the biosynthesis of the unique nickel-containing tetrapyrrole coenzyme F430, the prosthetic group of methyl-coenzyme M reductase (MCR), which plays a key role in methanogenesis and anaerobic methane oxidation. Catalyzes the insertion of Ni(2+) into sirohydrochlorin to yield Ni-sirohydrochlorin. The chain is Sirohydrochlorin cobaltochelatase from Methanococcus aeolicus (strain ATCC BAA-1280 / DSM 17508 / OCM 812 / Nankai-3).